The following is a 119-amino-acid chain: Anamorsin homolog (119 aa).

The segment covering 1–15 (MSSSATSTQAFSLKT) has biased composition (polar residues). Disordered stretches follow at residues 1–21 (MSSSATSTQAFSLKTRQPIPD) and 33–119 (LKQA…TDDV). The [2Fe-2S] cluster site is built by C42, C49, C52, and C54. The segment at 42–54 (CTTRRRACKNCVC) is fe-S binding site A. Residues C81, C84, C92, and C95 each contribute to the [4Fe-4S] cluster site. 2 short sequence motifs (cx2C motif) span residues 81–84 (CGNC) and 92–95 (CANC). Positions 81–95 (CGNCSKGDAFRCANC) are fe-S binding site B.

Belongs to the anamorsin family. Monomer. [2Fe-2S] cluster is required as a cofactor. It depends on [4Fe-4S] cluster as a cofactor.

Its subcellular location is the cytoplasm. The protein localises to the mitochondrion intermembrane space. Component of the cytosolic iron-sulfur (Fe-S) protein assembly (CIA) machinery. Required for the maturation of extramitochondrial Fe-S proteins. Part of an electron transfer chain functioning in an early step of cytosolic Fe-S biogenesis, facilitating the de novo assembly of a [4Fe-4S] cluster on the cytosolic Fe-S scaffold complex. Electrons are transferred from NADPH via a FAD- and FMN-containing diflavin oxidoreductase. Together with the diflavin oxidoreductase, also required for the assembly of the diferric tyrosyl radical cofactor of ribonucleotide reductase (RNR), probably by providing electrons for reduction during radical cofactor maturation in the catalytic small subunit. The sequence is that of Anamorsin homolog from Leishmania infantum.